The following is a 376-amino-acid chain: Carbohydrate sulfotransferase 14 (376 aa).

The disordered stretch occupies residues 1 to 30 (MFPRPLTPLAAPKSAETLGRTPRRAPLGRA). Residues 1 to 39 (MFPRPLTPLAAPKSAETLGRTPRRAPLGRARAGLGGPPL) are Cytoplasmic-facing. Over residues 18–30 (LGRTPRRAPLGRA) the composition is skewed to low complexity. The helical; Signal-anchor for type II membrane protein transmembrane segment at 40-60 (LLPSMLMFAVIVASSGLLLMI) threads the bilayer. Residues 61 to 376 (ERGILSEMKP…PNVTKEACHQ (316 aa)) lie on the Lumenal side of the membrane. A disordered region spans residues 76–96 (PSHKGAAWSGTDPKPRGLSLD). N-linked (GlcNAc...) asparagine glycosylation occurs at asparagine 110. 3'-phosphoadenylyl sulfate contacts are provided by residues 155 to 161 (PKVACSN) and 213 to 221 (RDPLERLLS). Asparagine 368 carries an N-linked (GlcNAc...) asparagine glycan.

The protein belongs to the sulfotransferase 2 family.

The protein resides in the golgi apparatus membrane. It catalyses the reaction dermatan + n 3'-phosphoadenylyl sulfate = dermatan 4'-sulfate + n adenosine 3',5'-bisphosphate + n H(+). Catalyzes the transfer of sulfate to position 4 of the N-acetylgalactosamine (GalNAc) residue of dermatan sulfate. Plays a pivotal role in the formation of 4-0-sulfated IdoA blocks in dermatan sulfate. Transfers sulfate to the C-4 hydroxyl of beta1,4-linked GalNAc that is substituted with an alpha-linked iduronic acid (IdoUA) at the C-3 hydroxyl. Transfers sulfate more efficiently to GalNAc residues in -IdoUA-GalNAc-IdoUA- than in -GlcUA-GalNAc-GlcUA-sequences. Has preference for partially desulfated dermatan sulfate. Addition of sulfate to GalNAc may occur immediately after epimerization of GlcUA to IdoUA. Appears to have an important role in the formation of the cerebellar neural network during postnatal brain development. The sequence is that of Carbohydrate sulfotransferase 14 (Chst14) from Mus musculus (Mouse).